Here is a 125-residue protein sequence, read N- to C-terminus: Succinate dehydrogenase assembly factor 3, mitochondrial (125 aa).

The transit peptide at 1-30 directs the protein to the mitochondrion; that stretch reads MPGKHVSRVRALYRRILLLHRALPPDLKAL.

It belongs to the complex I LYR family. SDHAF3 subfamily. As to quaternary structure, interacts with Sdhb within an Sdha-Sdhb subcomplex.

The protein resides in the mitochondrion matrix. Its function is as follows. Plays an essential role in the assembly of succinate dehydrogenase (SDH), an enzyme complex (also referred to as respiratory complex II) that is a component of both the tricarboxylic acid (TCA) cycle and the mitochondrial electron transport chain, and which couples the oxidation of succinate to fumarate with the reduction of ubiquinone (coenzyme Q) to ubiquinol. Promotes maturation of the iron-sulfur protein subunit Sdhb of the SDH catalytic dimer, protecting it from the deleterious effects of oxidants. May act together with SDHAF1. The protein is Succinate dehydrogenase assembly factor 3, mitochondrial of Mus musculus (Mouse).